Reading from the N-terminus, the 180-residue chain is Ribosome maturation factor RimM (180 aa).

The 73-residue stretch at 108-180 (PDEYYWVDLE…LIVVDWDPDF (73 aa)) folds into the PRC barrel domain.

This sequence belongs to the RimM family. In terms of assembly, binds ribosomal protein uS19.

It localises to the cytoplasm. Functionally, an accessory protein needed during the final step in the assembly of 30S ribosomal subunit, possibly for assembly of the head region. Essential for efficient processing of 16S rRNA. May be needed both before and after RbfA during the maturation of 16S rRNA. It has affinity for free ribosomal 30S subunits but not for 70S ribosomes. In Xanthomonas euvesicatoria pv. vesicatoria (strain 85-10) (Xanthomonas campestris pv. vesicatoria), this protein is Ribosome maturation factor RimM.